The following is a 37-amino-acid chain: MKVRPSVKVICEKCKIIRRKGRVMVICQNPKHKQRQG.

The protein belongs to the bacterial ribosomal protein bL36 family.

The polypeptide is Large ribosomal subunit protein bL36 (Acetivibrio thermocellus (strain ATCC 27405 / DSM 1237 / JCM 9322 / NBRC 103400 / NCIMB 10682 / NRRL B-4536 / VPI 7372) (Clostridium thermocellum)).